The sequence spans 188 residues: Elongation factor P (188 aa).

Belongs to the elongation factor P family.

It is found in the cytoplasm. Its pathway is protein biosynthesis; polypeptide chain elongation. Involved in peptide bond synthesis. Stimulates efficient translation and peptide-bond synthesis on native or reconstituted 70S ribosomes in vitro. Probably functions indirectly by altering the affinity of the ribosome for aminoacyl-tRNA, thus increasing their reactivity as acceptors for peptidyl transferase. The polypeptide is Elongation factor P (Nitrobacter winogradskyi (strain ATCC 25391 / DSM 10237 / CIP 104748 / NCIMB 11846 / Nb-255)).